We begin with the raw amino-acid sequence, 272 residues long: Sulfate transporter CysZ (272 aa).

The next 4 membrane-spanning stretches (helical) occupy residues 29–49, 66–86, 148–168, and 219–239; these read FVIMPIVLNTVLLCGLFWLFI, WLSFLSVILLILSILTILLLF, IIALFLLSFIPLVGQTIVPVL, and FVPVINLLIMPVAVCGATLMW.

Belongs to the CysZ family.

The protein resides in the cell inner membrane. In terms of biological role, high affinity, high specificity proton-dependent sulfate transporter, which mediates sulfate uptake. Provides the sulfur source for the cysteine synthesis pathway. In Haemophilus influenzae (strain ATCC 51907 / DSM 11121 / KW20 / Rd), this protein is Sulfate transporter CysZ.